The sequence spans 248 residues: Kallikrein-12 (248 aa).

Residues 1–17 (MGLSIFLLLCVLGLSQA) form the signal peptide. Positions 22-246 (IFNGTECGRN…YVDWIRMIMR (225 aa)) constitute a Peptidase S1 domain. The N-linked (GlcNAc...) asparagine glycan is linked to Asn-24. 6 cysteine pairs are disulfide-bonded: Cys-28/Cys-161, Cys-47/Cys-63, Cys-133/Cys-235, Cys-140/Cys-206, Cys-172/Cys-186, and Cys-196/Cys-222. Catalysis depends on charge relay system residues His-62 and Asp-108. A glycan (N-linked (GlcNAc...) asparagine) is linked at Asn-163. Residue Ser-200 is the Charge relay system of the active site.

This sequence belongs to the peptidase S1 family. Kallikrein subfamily.

It localises to the secreted. This Homo sapiens (Human) protein is Kallikrein-12 (KLK12).